The chain runs to 372 residues: Serine protease inhibitor 42Dd (372 aa).

A signal peptide spans 1–15; that stretch reads MYYLCIFLWVTSVAC. N-linked (GlcNAc...) asparagine glycosylation is found at N197 and N232.

Belongs to the serpin family. As to expression, expressed in the ovary.

It is found in the secreted. Its function is as follows. Serine protease inhibitor with activity toward trypsin. Involved in innate immunity to fungal infection by negatively regulating the Toll signaling pathway and suppressing the expression of the antifungal peptide drosomycin. Acts upstream of SPE and grass, and downstream of the fungal cell wall pattern recognition receptor GNBP3. May function specifically in the GNBP3-dependent beta-1,3-glucan branch of the Toll pathway. The sequence is that of Serine protease inhibitor 42Dd from Drosophila melanogaster (Fruit fly).